The primary structure comprises 281 residues: Small ribosomal subunit protein uS3 (281 aa).

A KH type-2 domain is found at 38 to 106; that stretch reads IRRLLSTGLE…QVQLNILEVK (69 aa). Residues 218–281 are disordered; the sequence is APAGAERARR…VTHEPQIAES (64 aa). The segment covering 238 to 256 has biased composition (low complexity); sequence SGAAGTTVTGTDAGRAVGG.

The protein belongs to the universal ribosomal protein uS3 family. Part of the 30S ribosomal subunit. Forms a tight complex with proteins S10 and S14.

Its function is as follows. Binds the lower part of the 30S subunit head. Binds mRNA in the 70S ribosome, positioning it for translation. The protein is Small ribosomal subunit protein uS3 of Mycobacterium leprae (strain Br4923).